The chain runs to 365 residues: Aminomethyltransferase (365 aa).

It belongs to the GcvT family. The glycine cleavage system is composed of four proteins: P, T, L and H.

It carries out the reaction N(6)-[(R)-S(8)-aminomethyldihydrolipoyl]-L-lysyl-[protein] + (6S)-5,6,7,8-tetrahydrofolate = N(6)-[(R)-dihydrolipoyl]-L-lysyl-[protein] + (6R)-5,10-methylene-5,6,7,8-tetrahydrofolate + NH4(+). In terms of biological role, the glycine cleavage system catalyzes the degradation of glycine. The sequence is that of Aminomethyltransferase from Cronobacter sakazakii (strain ATCC BAA-894) (Enterobacter sakazakii).